A 2300-amino-acid polypeptide reads, in one-letter code: Protein Ycf2 (2300 aa).

1642–1649 (GSIGTGRS) serves as a coordination point for ATP.

Belongs to the Ycf2 family.

It is found in the plastid. The protein localises to the chloroplast stroma. Functionally, probable ATPase of unknown function. Its presence in a non-photosynthetic plant (Epifagus virginiana) and experiments in tobacco indicate that it has an essential function which is probably not related to photosynthesis. The protein is Protein Ycf2 of Vitis vinifera (Grape).